The primary structure comprises 284 residues: 4-hydroxy-3-methylbut-2-enyl diphosphate reductase (284 aa).

Position 12 (cysteine 12) interacts with [4Fe-4S] cluster. (2E)-4-hydroxy-3-methylbut-2-enyl diphosphate-binding residues include histidine 40 and histidine 72. Residues histidine 40 and histidine 72 each coordinate dimethylallyl diphosphate. Isopentenyl diphosphate is bound by residues histidine 40 and histidine 72. Cysteine 94 serves as a coordination point for [4Fe-4S] cluster. Histidine 122 serves as a coordination point for (2E)-4-hydroxy-3-methylbut-2-enyl diphosphate. Residue histidine 122 coordinates dimethylallyl diphosphate. Histidine 122 contacts isopentenyl diphosphate. Glutamate 124 acts as the Proton donor in catalysis. Position 161 (threonine 161) interacts with (2E)-4-hydroxy-3-methylbut-2-enyl diphosphate. Residue cysteine 193 coordinates [4Fe-4S] cluster. The (2E)-4-hydroxy-3-methylbut-2-enyl diphosphate site is built by serine 221, asparagine 223, and serine 264. 3 residues coordinate dimethylallyl diphosphate: serine 221, asparagine 223, and serine 264. Isopentenyl diphosphate-binding residues include serine 221, asparagine 223, and serine 264.

It belongs to the IspH family. The cofactor is [4Fe-4S] cluster.

The catalysed reaction is isopentenyl diphosphate + 2 oxidized [2Fe-2S]-[ferredoxin] + H2O = (2E)-4-hydroxy-3-methylbut-2-enyl diphosphate + 2 reduced [2Fe-2S]-[ferredoxin] + 2 H(+). It catalyses the reaction dimethylallyl diphosphate + 2 oxidized [2Fe-2S]-[ferredoxin] + H2O = (2E)-4-hydroxy-3-methylbut-2-enyl diphosphate + 2 reduced [2Fe-2S]-[ferredoxin] + 2 H(+). The protein operates within isoprenoid biosynthesis; dimethylallyl diphosphate biosynthesis; dimethylallyl diphosphate from (2E)-4-hydroxy-3-methylbutenyl diphosphate: step 1/1. It functions in the pathway isoprenoid biosynthesis; isopentenyl diphosphate biosynthesis via DXP pathway; isopentenyl diphosphate from 1-deoxy-D-xylulose 5-phosphate: step 6/6. Its function is as follows. Catalyzes the conversion of 1-hydroxy-2-methyl-2-(E)-butenyl 4-diphosphate (HMBPP) into a mixture of isopentenyl diphosphate (IPP) and dimethylallyl diphosphate (DMAPP). Acts in the terminal step of the DOXP/MEP pathway for isoprenoid precursor biosynthesis. This Dehalococcoides mccartyi (strain ATCC BAA-2266 / KCTC 15142 / 195) (Dehalococcoides ethenogenes (strain 195)) protein is 4-hydroxy-3-methylbut-2-enyl diphosphate reductase.